A 323-amino-acid chain; its full sequence is Serine/threonine-protein phosphatase PP1-gamma catalytic subunit (323 aa).

An N-acetylalanine modification is found at alanine 2. Positions 64, 66, 92, and 124 each coordinate Mn(2+). The Proton donor role is filled by histidine 125. Residues histidine 173 and histidine 248 each contribute to the Mn(2+) site. Phosphothreonine occurs at positions 307 and 311.

Belongs to the PPP phosphatase family. PP-1 subfamily. In terms of assembly, PP1 comprises a catalytic subunit, PPP1CA, PPP1CB or PPP1CC, which is folded into its native form by inhibitor 2 and glycogen synthetase kinase 3, and then complexed to one or several targeting or regulatory subunits. PPP1R12A, PPP1R12B and PPP1R12C mediate binding to myosin. PPP1R3A (in skeletal muscle), PPP1R3B (in liver), PPP1R3C, PPP1R3D and PPP1R3F (in brain) mediate binding to glycogen. PPP1R15A and PPP1R15B mediate binding to EIF2S1. Part of a complex containing PPP1R15B, PP1 and NCK1/2. Interacts with PPP1R3B, PPP1R7 and CDCA2. Interacts with IKFZ1; the interaction targets PPP1CC to pericentromeric heterochromatin, dephosphorylates IKAROS, stabilizes it and prevents it from degradation. Interacts with NOM1 and PPP1R8. Component of the PTW/PP1 phosphatase complex, composed of PPP1R10/PNUTS, TOX4, WDR82, and PPP1CA or PPP1CB or PPP1CC. Interacts with PPP1R8. Interacts with NEK2. Interacts with PPP1R42; the interaction is direct. Interacts with URI1; the interaction is phosphorylation-dependent and occurs in a growth factor-dependent manner. Interacts with FOXP3. Interacts with TMEM225 (via RVxF motif). Interacts with MKI67. Interacts with RRP1B; this targets PPP1CC to the nucleolus. Interacts with DYNLT4. Interacts (via RVxF motif) with FIRRM; regulates PLK1 kinase activity. Interacts with the KNL1 complex subunit KNL1; the interaction is direct and mutually exclusive with KNL1 binding to microtubules. Component of the SHOC2-MRAS-PP1c (SMP) complex consisting of SHOC2, GTP-bound M-Ras/MRAS and the catalytic subunit of protein phosphatase 1 (either PPP1CA, PPP1CB or PPP1CC). SHOC2 and PP1c preferably bind M-Ras/MRAS, but they also bind K-Ras/KRAS, N-Ras/NRAS and H-Ras/HRAS; these interactions are GTP-dependent and both SHOC2 and PP1c are required to form a stable complex. Interacts with SHOC2 in the absence of Ras GTPases. Mn(2+) serves as cofactor. Phosphorylated by NEK2.

Its subcellular location is the cytoplasm. It is found in the nucleus. The protein resides in the cleavage furrow. The protein localises to the nucleolus. It localises to the nucleoplasm. Its subcellular location is the chromosome. It is found in the centromere. The protein resides in the kinetochore. The protein localises to the nucleus speckle. It localises to the midbody. Its subcellular location is the mitochondrion. It is found in the cytoskeleton. The protein resides in the microtubule organizing center. The catalysed reaction is O-phospho-L-seryl-[protein] + H2O = L-seryl-[protein] + phosphate. The enzyme catalyses O-phospho-L-threonyl-[protein] + H2O = L-threonyl-[protein] + phosphate. With respect to regulation, inactivated by binding to URI1. Its function is as follows. Protein phosphatase that associates with over 200 regulatory proteins to form highly specific holoenzymes which dephosphorylate hundreds of biological targets. Protein phosphatase 1 (PP1) is essential for cell division, and participates in the regulation of glycogen metabolism, muscle contractility and protein synthesis. Dephosphorylates RPS6KB1. Involved in regulation of ionic conductances and long-term synaptic plasticity. May play an important role in dephosphorylating substrates such as the postsynaptic density-associated Ca(2+)/calmodulin dependent protein kinase II. Component of the PTW/PP1 phosphatase complex, which plays a role in the control of chromatin structure and cell cycle progression during the transition from mitosis into interphase. Regulates the recruitment of the SKA complex to kinetochores. Core component of the SHOC2-MRAS-PP1c (SMP) holophosphatase complex that regulates the MAPK pathway activation. Dephosphorylates MKI67 at the onset of anaphase. The SMP complex specifically dephosphorylates the inhibitory phosphorylation at 'Ser-259' of RAF1 kinase, 'Ser-365' of BRAF kinase and 'Ser-214' of ARAF kinase, stimulating their kinase activities. The SMP complex enhances the dephosphorylation activity and substrate specificity of PP1c. The protein is Serine/threonine-protein phosphatase PP1-gamma catalytic subunit (PPP1CC) of Canis lupus familiaris (Dog).